We begin with the raw amino-acid sequence, 1838 residues long: Type III effector DspE (1838 aa).

Positions 1–12 (MELKSLGTEHKA) are enriched in basic and acidic residues. Disordered stretches follow at residues 1–72 (MELK…AAHQ), 86–163 (KKFS…PTQQ), 182–264 (MAHP…VATP), 281–300 (LEGTDTTQSPLKPQSMLKGS), 398–418 (DGKSGKISLGSGTQSHNKTML), and 1480–1505 (NLAAGSRERSTTSGQFGSTTSASNNR). The span at 27 to 46 (ALQQGSSSSSPQNAAASLAA) shows a compositional bias: low complexity. Over residues 91–103 (SAPQGQPGTTHSK) the composition is skewed to polar residues. Basic and acidic residues predominate over residues 110 to 120 (LLARDDGETQH). The span at 407–418 (GSGTQSHNKTML) shows a compositional bias: polar residues. Residues 1480–1502 (NLAAGSRERSTTSGQFGSTTSAS) show a composition bias toward low complexity.

The protein belongs to the AvrE family. In terms of assembly, interacts with the chaperone DspF (DspB/F).

Its subcellular location is the secreted. It localises to the host cell. Its activity is regulated as follows. Polyamidoamine dendrimers inhibit channel and virulence activities. Its function is as follows. Major virulence factor that may function as a water- and solute-permeable channel dedicated to creating osmotic/water potential perturbation and a water- and nutrient-rich apoplast in which bacteria multiply within the infected plant tissues. Expression in Xenopus oocytes results in inward and outward currents, permeability to water and osmolarity-dependent oocyte swelling and bursting. Functionally, acts as a major cell-death inducer during fire blight, a necrotic disease affecting plants of the rosaceous family, and during hypersensitive response (HR) on non-host plants. Essential for pathogenicity on host plants. Contributes quantitatively and in a strain-dependent fashion to HR elicitation in non-host plants such as tobacco. Induces cell death in leaves of apple, a host plant, and tobacco, a non-host plant. Also triggers necrosis in the widely used model, non-host, N.benthamiana and in yeast. Required for the transient multiplication and survival of E.amylovora in non-host A.thaliana leaves. In A.thaliana, triggers electrolyte leakage, activation of defense pathways, reactive oxygen species (ROS) accumulation and cell death. The toxicity of DspE in A.thaliana is associated with an early repression of de novo protein synthesis. This is Type III effector DspE from Erwinia amylovora (Fire blight bacteria).